The primary structure comprises 436 residues: Chorion-specific transcription factor GCMa (436 aa).

The GCM DNA-binding region spans 14–169 (LSWDINDMKL…KLEAEARRAM (156 aa)). C76, C82, C86, C113, C116, C125, H152, and H154 together coordinate Zn(2+).

In terms of processing, polyubiquitinated in the presence of UBE2D2 and FBXW2 (in vitro).

The protein resides in the nucleus. Functionally, transcription factor involved in the control of expression of placental growth factor (PGF) and other placenta-specific genes. Binds to the trophoblast-specific element 2 (TSE2) of the aromatase gene enhancer. Binds to the SYDE1 promoter. Has a central role in mediating the differentiation of trophoblast cells along both the villous and extravillous pathways in placental development. This is Chorion-specific transcription factor GCMa (Gcm1) from Rattus norvegicus (Rat).